Here is a 520-residue protein sequence, read N- to C-terminus: Glutamate--cysteine ligase (520 aa).

Belongs to the glutamate--cysteine ligase type 1 family. Type 1 subfamily.

It catalyses the reaction L-cysteine + L-glutamate + ATP = gamma-L-glutamyl-L-cysteine + ADP + phosphate + H(+). Its pathway is sulfur metabolism; glutathione biosynthesis; glutathione from L-cysteine and L-glutamate: step 1/2. This chain is Glutamate--cysteine ligase, found in Leptospira interrogans serogroup Icterohaemorrhagiae serovar copenhageni (strain Fiocruz L1-130).